The chain runs to 318 residues: Aspartate carbamoyltransferase catalytic subunit (318 aa).

Positions 59 and 60 each coordinate carbamoyl phosphate. K87 lines the L-aspartate pocket. Carbamoyl phosphate is bound by residues R109, H137, and Q140. L-aspartate-binding residues include R170 and R224. Carbamoyl phosphate is bound by residues G265 and P266.

This sequence belongs to the aspartate/ornithine carbamoyltransferase superfamily. ATCase family. As to quaternary structure, heterododecamer (2C3:3R2) of six catalytic PyrB chains organized as two trimers (C3), and six regulatory PyrI chains organized as three dimers (R2).

It catalyses the reaction carbamoyl phosphate + L-aspartate = N-carbamoyl-L-aspartate + phosphate + H(+). It functions in the pathway pyrimidine metabolism; UMP biosynthesis via de novo pathway; (S)-dihydroorotate from bicarbonate: step 2/3. Catalyzes the condensation of carbamoyl phosphate and aspartate to form carbamoyl aspartate and inorganic phosphate, the committed step in the de novo pyrimidine nucleotide biosynthesis pathway. The sequence is that of Aspartate carbamoyltransferase catalytic subunit from Rhizobium johnstonii (strain DSM 114642 / LMG 32736 / 3841) (Rhizobium leguminosarum bv. viciae).